The sequence spans 123 residues: Large ribosomal subunit protein bL12 (123 aa).

This sequence belongs to the bacterial ribosomal protein bL12 family. As to quaternary structure, homodimer. Part of the ribosomal stalk of the 50S ribosomal subunit. Forms a multimeric L10(L12)X complex, where L10 forms an elongated spine to which 2 to 4 L12 dimers bind in a sequential fashion. Binds GTP-bound translation factors.

Its function is as follows. Forms part of the ribosomal stalk which helps the ribosome interact with GTP-bound translation factors. Is thus essential for accurate translation. The chain is Large ribosomal subunit protein bL12 from Neisseria meningitidis serogroup C (strain 053442).